Consider the following 152-residue polypeptide: MSEALTFESKYALLYLGGGLLAMIYGLITFFMAFPAFTSRGNVIFTIKTGPSGEIFLRKRSVLFSEVKRLYMGRHQYSLKGIFFEDIIIEKTDGKIVRIPTWNIITNPLFFEAVERYILPHLNEEAQNNWISQFTEVQRKAYLKEFENHPKL.

The chain crosses the membrane as a helical span at residues 12-34; sequence ALLYLGGGLLAMIYGLITFFMAF.

To B.subtilis YfjD.

It localises to the membrane. This is an uncharacterized protein from Bacillus subtilis (strain 168).